A 544-amino-acid chain; its full sequence is Chaperonin GroEL (544 aa).

ATP-binding positions include 29–32 (TLGP), Lys-50, 86–90 (DGTTT), Gly-413, 479–481 (DAA), and Asp-495.

Belongs to the chaperonin (HSP60) family. As to quaternary structure, forms a cylinder of 14 subunits composed of two heptameric rings stacked back-to-back. Interacts with the co-chaperonin GroES.

The protein resides in the cytoplasm. The enzyme catalyses ATP + H2O + a folded polypeptide = ADP + phosphate + an unfolded polypeptide.. Functionally, together with its co-chaperonin GroES, plays an essential role in assisting protein folding. The GroEL-GroES system forms a nano-cage that allows encapsulation of the non-native substrate proteins and provides a physical environment optimized to promote and accelerate protein folding. The protein is Chaperonin GroEL of Borrelia duttonii (strain Ly).